A 364-amino-acid polypeptide reads, in one-letter code: MEPLLSLKSVSKSYDDLNILDDIDIDIESGYFYTLLGPSGCGKTTILKLIAGFEYPDSGEVIYQNKPIGNLPPNKRKVNTVFQDYALFPHLNVYDNIAFGLKLKKLSKTEIDQKVTEALKLVKLSGYEKRNINEMSGGQKQRVAIARAIVNEPEILLLDESLSALDLKLRTEMQYELRELQSRLGITFIFVTHDQEEALALSDFLFVLKDGKIQQFGTPTDIYDEPVNRFVADFIGESNIVEGRMVRDYVVNIYGQDFECVDMGIPENKKVEVVIRPEDISLIKAEEGLFKATVDSMLFRGVHYEICCIDNKGYEWVIQTTKKAEVGSEVGLYFDPEAIHIMVPGETEEEFDKRIESYEEVDNA.

In terms of domain architecture, ABC transporter spans 5-235; the sequence is LSLKSVSKSY…PVNRFVADFI (231 aa). Residue 37-44 coordinates ATP; that stretch reads GPSGCGKT.

It belongs to the ABC transporter superfamily. Spermidine/putrescine importer (TC 3.A.1.11.1) family. In terms of assembly, the complex is composed of two ATP-binding proteins (PotA), two transmembrane proteins (PotB and PotC) and a solute-binding protein (PotD).

It localises to the cell membrane. It catalyses the reaction ATP + H2O + polyamine-[polyamine-binding protein]Side 1 = ADP + phosphate + polyamineSide 2 + [polyamine-binding protein]Side 1.. Functionally, part of the ABC transporter complex PotABCD involved in spermidine/putrescine import. Responsible for energy coupling to the transport system. The protein is Spermidine/putrescine import ATP-binding protein PotA of Staphylococcus aureus (strain USA300).